The primary structure comprises 204 residues: MPKNKKTEWQVGDPAISVVSDQFCNPYPMDLLVKRKVQNFSKDYYEVFDPSGNLLLQIDGQAWGFNRKRVMRDPAGFTILSMRQKGLALKNKWEVHGGESKEREDLLFTVQQSQAVSLKTSVDVFLPENNNVKKTNTCDFHASGGYSNISFKVFKADALIAGVGFTWGSFCKGKYNFKVRVNPEVDYAFIIALLVMVDDNENWC.

It belongs to the LOR family.

Functionally, might be related to the phospholipid scramblase and tubby-like superfamily of membrane tethered transcription factors. The sequence is that of Protein LURP-one-related 14 from Arabidopsis thaliana (Mouse-ear cress).